The chain runs to 131 residues: Global transcriptional regulator Spx (131 aa).

Cys10 and Cys13 form a disulfide bridge.

Belongs to the ArsC family. Spx subfamily. As to quaternary structure, interacts with the C-terminal domain of the alpha subunit of the RNAP.

Its subcellular location is the cytoplasm. Its function is as follows. Global transcriptional regulator that plays a key role in stress response and exerts either positive or negative regulation of genes. Acts by interacting with the C-terminal domain of the alpha subunit of the RNA polymerase (RNAP). This interaction can enhance binding of RNAP to the promoter region of target genes and stimulate their transcription, or block interaction of RNAP with activator. The protein is Global transcriptional regulator Spx of Staphylococcus epidermidis (strain ATCC 35984 / DSM 28319 / BCRC 17069 / CCUG 31568 / BM 3577 / RP62A).